A 117-amino-acid chain; its full sequence is uncharacterized protein (117 aa).

Residues 1–22 form the signal peptide; sequence MHVKYLAGIVGAALLMAGCSSS.

This is an uncharacterized protein from Escherichia coli O6:H1 (strain CFT073 / ATCC 700928 / UPEC).